Consider the following 470-residue polypeptide: Na(+)/H(+) antiporter NhaA 2 (470 aa).

A run of 11 helical transmembrane segments spans residues 34–54, 85–105, 121–141, 150–170, 179–199, 202–222, 241–261, 317–337, 357–377, 395–415, and 423–443; these read FLHIEAASGILLLVAAAIALL, LEWVVNDGLMAIFFFVVGMEI, ALPAAAALGGMLVPAGLYLLL, GWGVPMATDIAFAVGILTLLG, VLLLALAVIDDLGAIIVIAVF, SGVAITGLLVAALGIVGVFAM, WAGVYSAGIHPTIAGVIIGLI, SLIATLHPWVAFGIMPVFALA, LATATGLLVGKPLGVIGACWL, LLVLGSTAGIGFTMALFIAQL, and LAAGKLGVLAASGAAAVVALV.

This sequence belongs to the NhaA Na(+)/H(+) (TC 2.A.33) antiporter family.

Its subcellular location is the cell inner membrane. The catalysed reaction is Na(+)(in) + 2 H(+)(out) = Na(+)(out) + 2 H(+)(in). Na(+)/H(+) antiporter that extrudes sodium in exchange for external protons. This is Na(+)/H(+) antiporter NhaA 2 from Myxococcus xanthus (strain DK1622).